We begin with the raw amino-acid sequence, 637 residues long: MITITLPDSSTKTFDGPVTGEQIAKSISEGLWRECVAVEVDGAAMDLSEPIATDAAVRLITTRDPEGLHIMRHSAAHVMAEAVQRVFPDAELTIGPVVEDGFYYDIDMEPVSEEIFSRVEAEIKKIVSAKIPFVRKEVDKAEALDRYRDQPYKTEILNEIEDDTVSLYTNGDFTDLCRGPHVPHTGFVRAVKLTKISGAYWRGDQNREQLQRLYGTAFFSKKELDAYLTLIEEAKKRDHRKLGAELDLFSFHEEAAGMPFFHPNGMKLWNALLDYWRLEHRAAGYVEVKTPVMLDRALWEKSGHWENYRENMYVSVIDDNQYAIKPMNCPGGMLLYKEKRYSYRDLPLRVAEIGLVHRHELSGVLSGLFRVRAFHQDDAHIFMTPDQIEQEIFGVLKLVETIYSTFGLGFHLELSTRPAKSIGTDEQWVKATAGLRAALDAYGKGYAVNEGDGAFYGPKIDVHIKDALGRTWQCGTIQLDMSLPERFDLSYIDAGSEKQRPVMIHRVIYGSIERFLGILIEHFAGKFPLWLAPTQAVLLPLNDDMIPYAREVRQEFEQAGIRTEIDDRSESLNKKVRQAQIDKIPLIITLGGKEKEARTLSVRTLDGQVRHGVSHEAFFAVAKEHIAKRLQTPVVFA.

Residues 1–61 (MITITLPDSS…ATDAAVRLIT (61 aa)) enclose the TGS domain. Residues 238–528 (DHRKLGAELD…LIEHFAGKFP (291 aa)) are catalytic. 3 residues coordinate Zn(2+): Cys329, His380, and His505.

This sequence belongs to the class-II aminoacyl-tRNA synthetase family. In terms of assembly, homodimer. It depends on Zn(2+) as a cofactor.

Its subcellular location is the cytoplasm. It catalyses the reaction tRNA(Thr) + L-threonine + ATP = L-threonyl-tRNA(Thr) + AMP + diphosphate + H(+). Functionally, catalyzes the attachment of threonine to tRNA(Thr) in a two-step reaction: L-threonine is first activated by ATP to form Thr-AMP and then transferred to the acceptor end of tRNA(Thr). Also edits incorrectly charged L-seryl-tRNA(Thr). In Desulfosudis oleivorans (strain DSM 6200 / JCM 39069 / Hxd3) (Desulfococcus oleovorans), this protein is Threonine--tRNA ligase.